Reading from the N-terminus, the 130-residue chain is Small ribosomal subunit protein uS9 (130 aa).

Residues 109 to 130 are disordered; it reads RVKERKKYGQKGARAKFQFSKR.

It belongs to the universal ribosomal protein uS9 family.

The chain is Small ribosomal subunit protein uS9 from Desulfotalea psychrophila (strain LSv54 / DSM 12343).